A 113-amino-acid polypeptide reads, in one-letter code: MHEMSIAMSVVEAVVDKAREEGGGKITGIDLVVGRLAGVEVESLKFCFGAAARGTLAEGAELVIEEPEGRGRCEACGAEFPVTSFYAKCSACGQFRVKIESGRELAVRSFTIE.

H2 lines the Ni(2+) pocket. Zn(2+) is bound by residues C73, C76, C89, and C92.

Belongs to the HypA/HybF family.

Functionally, involved in the maturation of [NiFe] hydrogenases. Required for nickel insertion into the metal center of the hydrogenase. This is Hydrogenase maturation factor HypA from Chlorobaculum tepidum (strain ATCC 49652 / DSM 12025 / NBRC 103806 / TLS) (Chlorobium tepidum).